A 306-amino-acid polypeptide reads, in one-letter code: Serine/threonine-protein kinase KIN28 (306 aa).

Positions 7–290 (YTKEKKVGEG…AVQCLESDYF (284 aa)) constitute a Protein kinase domain. ATP is bound by residues 13–21 (VGEGTYAVV) and lysine 36. The active-site Proton acceptor is aspartate 129. Phosphothreonine; by CAK is present on threonine 162.

Belongs to the protein kinase superfamily. CMGC Ser/Thr protein kinase family. CDC2/CDKX subfamily. In terms of assembly, CCL1 and KIN28 form the TFIIK complex, a component of the TFIIH holo complex. Component of a complex consisting of KIN28, CCL1 and TFB3. Interacts with TFB3. Also interacts with HNT1 and HOG1. Post-translationally, phosphorylation of Thr-162 regulates the affinity of interaction between CCL1, KIN28 and TFB3. Thr-162 phosphorylation does not vary through the cell cycle and is necessary for full kinase activity.

The protein localises to the nucleus. The enzyme catalyses [DNA-directed RNA polymerase] + ATP = phospho-[DNA-directed RNA polymerase] + ADP + H(+). In terms of biological role, catalytic component of the TFIIK complex (KIN28-CCL1 dimer) which is the protein kinase component of transcription factor IIH (TFIIH) and phosphorylates the C-terminal domain of RNA polymerase II during transition from transcription to elongation after preinitiation complex (PIC) formation, thereby positively regulating transcription. TFIIH (or factor B) is essential for both basal and activated transcription, and is involved in nucleotide excision repair (NER) of damaged DNA. TFIIH has DNA-dependent ATPase activity and is essential for polymerase II transcription in vitro. Essential for cell proliferation. This is Serine/threonine-protein kinase KIN28 (KIN28) from Saccharomyces cerevisiae (strain ATCC 204508 / S288c) (Baker's yeast).